Here is a 719-residue protein sequence, read N- to C-terminus: DNA replication licensing factor MCM7 (719 aa).

Residue Ala-2 is modified to N-acetylalanine. Glycyl lysine isopeptide (Lys-Gly) (interchain with G-Cter in SUMO2) cross-links involve residues Lys-15 and Lys-28. The residue at position 314 (Ser-314) is a Phosphoserine. The MCM domain maps to Phe-332–Thr-538. Tyr-345 is an ATP binding site. Ser-365 is modified (phosphoserine). ATP contacts are provided by Gly-384, Ala-386, Lys-387, Ser-388, and Asn-489. Phosphoserine is present on Ser-500. Residues Ser-513–Asp-516 carry the Arginine finger motif. Arg-514 provides a ligand contact to ATP. The tract at residues Ile-521 to Ala-564 is interaction with RAD17. The interval Leu-577 to Val-719 is interaction with ATRIP. ATP is bound at residue Arg-604. The residue at position 678 (Ser-678) is a Phosphoserine.

It belongs to the MCM family. As to quaternary structure, component of the MCM2-7 complex. The complex forms a toroidal hexameric ring with the proposed subunit order MCM2-MCM6-MCM4-MCM7-MCM3-MCM5. Component of the CMG helicase complex, a hexameric ring of related MCM2-7 subunits stabilized by CDC45 and the tetrameric GINS complex. Interacts with the ATR-ATRIP complex and with RAD17. Interacts with TIPIN. Interacts with MCMBP. Interacts with ANKRD17. Component of the replisome complex composed of at least DONSON, MCM2, MCM7, PCNA and TICRR. In terms of processing, O-glycosylated (O-GlcNAcylated), in a cell cycle-dependent manner. Post-translationally, ubiquitinated by ECS(LRR1) E3 ubiquitin-protein ligase complex when forks converge following formation of DNA interstrand cross-links. During mitosis, ubiquitinated by TRAIP when forks converge following formation of DNA interstrand cross-links. Short ubiquitin chains on MCM7 promote recruitment of DNA glycosylase NEIL3. If the interstrand cross-link cannot be cleaved by NEIL3, the ubiquitin chains continue to grow on MCM7, promoting the unloading of the CMG helicase complex by the VCP/p97 ATPase.

It localises to the nucleus. It is found in the chromosome. The catalysed reaction is ATP + H2O = ADP + phosphate + H(+). In terms of biological role, acts as a component of the MCM2-7 complex (MCM complex) which is the replicative helicase essential for 'once per cell cycle' DNA replication initiation and elongation in eukaryotic cells. Core component of CDC45-MCM-GINS (CMG) helicase, the molecular machine that unwinds template DNA during replication, and around which the replisome is built. The active ATPase sites in the MCM2-7 ring are formed through the interaction surfaces of two neighboring subunits such that a critical structure of a conserved arginine finger motif is provided in trans relative to the ATP-binding site of the Walker A box of the adjacent subunit. The six ATPase active sites, however, are likely to contribute differentially to the complex helicase activity. Uncomplexed form does not show ATPase or DNA helicase. Required for S-phase checkpoint activation upon UV-induced damage. This Mus musculus (Mouse) protein is DNA replication licensing factor MCM7 (Mcm7).